The following is a 364-amino-acid chain: 3'(2'),5'-bisphosphate nucleotidase 1 (364 aa).

The active-site Proton acceptor is aspartate 54. Mg(2+)-binding residues include glutamate 77, aspartate 141, isoleucine 143, and aspartate 144. Threonine 146 serves as the catalytic Proton acceptor. Adenosine 3',5'-bisphosphate contacts are provided by threonine 146, histidine 243, serine 272, lysine 275, arginine 289, and aspartate 302. Positions 243, 272, 275, 289, and 302 each coordinate AMP. Aspartate 302 serves as a coordination point for Mg(2+).

The protein belongs to the inositol monophosphatase superfamily. Requires Mg(2+) as cofactor.

It catalyses the reaction 3'-phosphoadenylyl sulfate + H2O = adenosine 5'-phosphosulfate + phosphate. It carries out the reaction adenosine 3',5'-bisphosphate + H2O = AMP + phosphate. The catalysed reaction is adenosine 2',5'-bisphosphate + H2O = AMP + phosphate. Its function is as follows. Phosphatase that converts adenosine 3'-phosphate 5'-phosphosulfate (PAPS) to adenosine 5'-phosphosulfate (APS) and 3'(2')-phosphoadenosine 5'-phosphate (PAP) to AMP. Regulates the flux of sulfur in the sulfur-activation pathway by converting PAPS to APS. Involved in salt tolerance. This is 3'(2'),5'-bisphosphate nucleotidase 1 (HAL21) from Candida albicans (strain SC5314 / ATCC MYA-2876) (Yeast).